Consider the following 30-residue polypeptide: Antibacterial 6.5 kDa protein (30 aa).

Positions 1-21 (XXVPYPRPFPRPPIGPRPLPF) are enriched in pro residues. A disordered region spans residues 1–30 (XXVPYPRPFPRPPIGPRPLPFPGGGRPFQS).

To bovine bactenecin 7.

Functionally, strong antimicrobial activity against P.immobilis and M.luteus, less active against E.coli D22. In Carcinus maenas (Common shore crab), this protein is Antibacterial 6.5 kDa protein.